A 369-amino-acid polypeptide reads, in one-letter code: MAWPCITRACCIARFWNQLDKADIAVPLVFTKYSEATEQPLPAQIPRSAAAPIDTQPGGDARAAGGGDAAPGPARPGTAPHGSPPADSVMRHDYKPWKVQRPEPSCKPKSEYQPSDTPFEKETQYQKDFRAWPIPKRGDHPWIPKAGPSPVLGPERGSPEKAAQEKRRKKEEEAEADEEHPKAARPGDAREKGRQRGDEAGGQEGRGRAAADALNRQIKEEVVAAGVSSSYRNEFRPWIDVKPVKAIKAKAQYKPPEEKMTHETSYSAQFKGETSKPAPADNKFLERRRIRTLYSEPYKEPPKVEKPSVKPSKPKKTTTSHKPLKKAKDKQIASGRAAKKKSAETSNTAKPEDKEKSKEMNNKLAEAKE.

2 disordered regions span residues 41-213 (LPAQ…AADA) and 251-369 (AQYK…EAKE). The span at 70-80 (APGPARPGTAP) shows a compositional bias: low complexity. Mn stretches follow at residues 87–110 (DSVMRHDYKPWKVQRPEPSCKPKS) and 122–145 (ETQYQKDFRAWPIPKRGDHPWIPK). Basic and acidic residues-rich tracts occupy residues 89–110 (VMRHDYKPWKVQRPEPSCKPKS), 118–142 (PFEKETQYQKDFRAWPIPKRGDHPW), and 179–209 (EHPKAARPGDAREKGRQRGDEAGGQEGRGRA). Residues 228–251 (SSSYRNEFRPWIDVKPVKAIKAKA) are mn 3. Residues 297–308 (PYKEPPKVEKPS) are compositionally biased toward basic and acidic residues. Basic residues predominate over residues 312–328 (SKPKKTTTSHKPLKKAK). Residues 350–369 (KPEDKEKSKEMNNKLAEAKE) are compositionally biased toward basic and acidic residues.

It belongs to the STOP family.

Its subcellular location is the cytoplasm. The protein resides in the cytoskeleton. Functionally, involved in microtubule stabilization in many cell types, including neuronal cells. Specifically has microtubule cold stabilizing activity. Involved in dendrite morphogenesis and maintenance by regulating lysosomal trafficking. This is Microtubule-associated protein 6 homolog (MAP6) from Gallus gallus (Chicken).